A 404-amino-acid polypeptide reads, in one-letter code: MSEVLATYLLTDTTDSEKRAEQIAAGLTVGSWTDLPLVKQEQLRKHKGRVVKVEEKEGTSENETQSVITIAYPEVNFSRDIPAVLTTVFGKLSLDGKIKLTDLEFSEGFKRSLPGPKFGIYGIRKLLGEFERPLLMSIFKGVIGRDLADIKEQLRQQALGGVDLIKDDEIFFENELAPFETRIIEGKQVLKETREETGHKTLYAVNLTGRTAELRDKARRAAELGADALLLNVFAYGLDVMQSLAEDKEIPLPIMAHPAVSGAFTSSPVYGLSHALLLGKLNRYCGADFSLFPSPYGSVALPKESALAIHDECVKDDVFHPSFAVPSAGIHPGMVPLLMRDFGIDHIINAGGGIHGHPKGGEGGGKAFRAIIDAVLEAQPIEEKAASCKDLQLALDKWGRVEAV.

Catalysis depends on Lys-91, which acts as the Proton acceptor. Substrate is bound by residues Lys-140, 166–169 (KDDE), His-257, Gly-329, and 351–352 (GG). 3 residues coordinate Mg(2+): Lys-166, Asp-168, and Glu-169. N6-carboxylysine is present on Lys-166.

The protein belongs to the RuBisCO large chain family. Type IV subfamily. In terms of assembly, homodimer. Mg(2+) is required as a cofactor.

The enzyme catalyses 5-methylsulfanyl-2,3-dioxopentyl phosphate = 2-hydroxy-5-methylsulfanyl-3-oxopent-1-enyl phosphate. It participates in amino-acid biosynthesis; L-methionine biosynthesis via salvage pathway; L-methionine from S-methyl-5-thio-alpha-D-ribose 1-phosphate: step 3/6. Functionally, catalyzes the enolization of 2,3-diketo-5-methylthiopentyl-1-phosphate (DK-MTP-1-P) into 2-hydroxy-3-keto-5-methylthiopentenyl-1-phosphate (HK-MTPenyl-1-P). The sequence is that of 2,3-diketo-5-methylthiopentyl-1-phosphate enolase from Bacillus velezensis (strain DSM 23117 / BGSC 10A6 / LMG 26770 / FZB42) (Bacillus amyloliquefaciens subsp. plantarum).